The primary structure comprises 3206 residues: MSATPAPIAIIGVGCRLPGGASDLDKLWKLLSEGRSGRTEIPADRWAAEEWFDAYPDAKESIVTKHGFFLKEDISQFDAKFFGISNTEAHAMDPQQRLFLMTTFEALEDAAIRVETLRGSNTGVFASIFERSYDRMGHKDLATISNTHMNGTGEATVLSNRISYCFDLKGPCMTIDTGCSGSLVALHQACQSLRLGESDLALVGGSQLVIHPDALSIMSGMGMLNPDGKSYAFDSRGQGYGRGEGVATIVLKRLDQALEDGDRIHAVIANSGVNQDGKTSGLNTPSGDAQAALASRVYREAGLNPADTSFVEAHGTGTQVGDREEIASISKVFCDDVARTDDLYVGSIKPNVGHLEATSGIAGLLKCILVLKHGQIPQNLDFIKPKPSLKLYERKIKIPTELTKLPTTRSGGPVRVSLNSFGYGGTNCHVILEAADSGRQPTGTNGIKTNGTRINGIKTNGADTNERESMKNGLSDGYQASLLDNATSHRPELIVLSASTEEALSSRAQDLLLWIKSRQVAPQTLHSLAYTLGVHRSALPYRRAIVAPTTEELVAELKVQGPAKRTASQAPVTFVFSGQGAQWHAMGLELIHFSHVFQQSMSAMEDALRRQGCPWSLVEELSKSPEHSRVGEAEIAQPATTAIQIALVDLLDSFSIRPSRVVGHSSGEIAAAYAAGALSRESAILVAYQRGVSSAKAKKMADVPGAMMAVSLDETEAMRYLKKLTQGAAVVACVNSPSSQTLSGDETAIDEIKEALDKDGIFARKLRVDTAYHSHHMQRVAEDYQEAISSIQSSGVRDGVTFYSSVTGAIKSAGFGADYWTSNLVSQVKFSQALTLLRKDQIKQDANMDMGVFVEIGPHSALAGPSRQTLGHEGAKKYKFEYLSALQRNTDALQSTLALGGRLFELGLKVDMTAVLTVADKTKPEIIRDLPLYPWDLAPFWRESRLSKARRFRQFPHHDLLGLFDPASTIHEPRWRYLINLDSLPWLRGHVVEGFTLYPGAGYLTMAIEATKQLVQMRGLQKPIAKFMLRNVAISKSIVLNEPDESSSGEVEVQLSMSAANEYEGSRWESFRIRSYNTADASWSEHCSGEITVEYETDEPDEVEGTREGELRQEEAMQFLATCQQSCDTDMTKSEFYDFAGRTGNEFSGAFTPIVSASYGKNRGVCEICTPDIAPLMPYRSFRPHVIHPITLDATQQINAVLFKKFITNAACVPTKIPLLEISASLFTTPGNSLTGAMQIEADGPKASNCEGWVFQKDEDGHVSPVIRLLVNLRAIGETREDEDRPFVQDAVNRLDWNLDADFMTQTSFRQVLSSTLGLEENTTHGFDGTKVSIQESDREYLETDQASSIWFRDAVRYVEENNAGMVTPQQVQFLGWMKRWLSSDYCRQITSGLTPEDEKRILQNVESSETSAQLQLLARVGKALPRILTGEIQPLDVMLEGNLLSRYYESGILVGPYEAVVEYLKILTFKNPRLHVLEAGAGTGGCTKWLFRGLSGQNGAVGLPVEKYTFTDVSSGFFEDARQTFAQWEDIMEFRTLDVDADPIEQGFEPGSYDVVVAANVLHATRKIDVTISRVRKLLKPGGSLVLVEIEPRGAAFGLVAGGLTGWWASEDDFRVEGPLLFRSQWQDVLARNGFGGIHVSWECMMVAKAEPAPSTNGTHARHSVVLIRDGGDDHVVKTAAKEFASRGIDIIDCPWEQVTAQEESVYVILDRAEKRLLLDPQPELFGIVNALVSAKCRLLWVLLQDTADYAASAYKGLVNAFIRVLRRESSNTGLVTLDIRQPALHPEVIAQVIADVARRRFWAATEDTLSSEPEFAYEDCRILIPRVKPDADFLQWARRRTWPAAADETETVPYQGDRVLKAEVATPGLLSSLRFVDDDMSACVGPSQIEIKAEAHGVNYKDVLLALGQRGSGAHMAGEFVGVVTAVGEDMRDLHQVGDRVMGFGSQPFSNQSRVHGHLARKTPDWMAATVAASIPHAYVTAYHCIMGIARLERGQSILIQAASGGVGQAAIQLAQHIGAVVFCTVSTSAKQNLIIDEYGIPESHIFSSQQTGSLKRGIMRLTNGKGVDLVLNSSAGEALRDSLDCVRSLGTFIELGKTEMQQASQLSMAAFNRSITFHAFDLETLSARDPRRVHRTLGDIISLLESKALRPIQPITIYPIDEIEDAFRFLASRKHTGKVVLQVEPTSMVKCLPAKPQPLRVRKDGTYVAAGGLGDLTSRICVFLASRGAGHVVSLSRRAIDDETKQKYMAAVREHGGELHILQCDITDEESMQRAAAYCSKLPPVRGVVNGALVLRDRTFAQMSIEEWKLPLQPKVFGTLNLDKYFASPDLAFFLTLSSVVAVVGKAGQSNYAAGNGFQDAFALAHANHPHTHYISVNVGAVSVDAHGALKEATQGDMSIGGMRASLRQNSVMDISFDEFFADIEYAMSGLARDHHRHQTIQGVTHQSMLDANDEHLLENPVFSQLTHSQRRQATGATQTDKIDLKKALGGVETMEEAEQLIRDATLTKFAVFLDRPIEDIRVDQSLATIGLDSLVSIELKNWMVRTFQVNLQTSELGGAGSIVALAATVASRSKLIPDKIRHSSRLQEATTQAENKDAPKNEKEGPSHNFYCCRASKDLPRHPLVDLDEAIHDLLNSIGHFAHTQEEYAELRRKAHALTAPGSLGRRLYSQLRAKADDPSVESWIAGPLLKALHLKRRYPLVPFSSFLGTHFDSAVPHSQAQRAAALTRALCEFKHDLDNRKLKPDFLGERPNCGHSLTWLFNALREPNVGCDKMVRYPGVEHVAVLRRGHLFRVPLREGNDIVSYQKLKATYQAILNLDLEEKLWTGILTTDNRDSWATNRQTLLALDERNTAYIKTLEESVVVMCLDDNSPVTREERVRFGYLGDSFNRWHDKTIQLVVTANGRSGTIFEHSMIDFMTTSQISQRLQAAIDTLDPENDNHGQDVEAVVDPASLKEIALVATTTEIEARMIMLRDKYAATTGRKIYTPHLIPSFGKAVLLAHAVPIKATVDLTIQLASRLYFGYLPASWETVSTAHFHLGRPEIVQVVLKSVVDFCDAALDSSVPRAEARVQLLRAAREMNAQIVKGGEGRNYFRLMDVLEVMSHEAVDEGAADAVPELFADPVWQRSYPRLIMQTMIERKLAQDPGYTMEDPENVWMNYTVNEDSLEVCYVSPRTGAERFKAALDRATDIIKTIIQAGQE.

The 430-residue stretch at 5 to 434 folds into the Ketosynthase family 3 (KS3) domain; that stretch reads PAPIAIIGVG…GTNCHVILEA (430 aa). Active-site for beta-ketoacyl synthase activity residues include C179, H314, and H354. The segment covering 441–463 has biased composition (polar residues); sequence PTGTNGIKTNGTRINGIKTNGAD. Positions 441–472 are disordered; sequence PTGTNGIKTNGTRINGIKTNGADTNERESMKN. Positions 575-890 are malonyl-CoA:ACP transacylase (MAT) domain; the sequence is VFSGQGAQWH…EYLSALQRNT (316 aa). The segment at 958-1098 is N-terminal hotdog fold; the sequence is HDLLGLFDPA…GEITVEYETD (141 aa). The dehydratase (DH) domain stretch occupies residues 958 to 1278; that stretch reads HDLLGLFDPA…LLVNLRAIGE (321 aa). One can recognise a PKS/mFAS DH domain in the interval 958–1284; that stretch reads HDLLGLFDPA…AIGETREDED (327 aa). Residue H990 is the Proton acceptor; for dehydratase activity of the active site. The segment at 1128 to 1284 is C-terminal hotdog fold; it reads DTDMTKSEFY…AIGETREDED (157 aa). D1193 functions as the Proton donor; for dehydratase activity in the catalytic mechanism. The interval 1450–1640 is methyltransferase (CMet) domain; sequence ESGILVGPYE…LARNGFGGIH (191 aa). The enoyl reductase (ER) domain stretch occupies residues 1871–2185; it reads LLSSLRFVDD…RKHTGKVVLQ (315 aa). The tract at residues 2208 to 2395 is ketoreductase (KR) domain; sequence GTYVAAGGLG…SVDAHGALKE (188 aa). In terms of domain architecture, Carrier spans 2499 to 2577; that stretch reads EEAEQLIRDA…ALAATVASRS (79 aa). S2537 carries the O-(pantetheine 4'-phosphoryl)serine modification. The disordered stretch occupies residues 2584-2611; that stretch reads IRHSSRLQEATTQAENKDAPKNEKEGPS. A compositionally biased stretch (basic and acidic residues) spans 2598–2610; sequence ENKDAPKNEKEGP. Residues 2994-3206 are carnitine O-acyltransferase (cAT) domain; sequence HLIPSFGKAV…IKTIIQAGQE (213 aa).

The cofactor is pantetheine 4'-phosphate.

Its pathway is secondary metabolite biosynthesis. In terms of biological role, highly reducing polyketide synthase; part of the gene cluster that mediates the biosynthesis of luteodienoside A, a glycosylated polyketide consisting of an unusual 1-O-beta-D-glucopyranosyl-myo-inositol (glucinol) ester of 3-hydroxy-2,2,4-trimethylocta-4,6-dienoic acid. LtbA produces the trimethylated polyketide chain from acetyl-CoA, malonyl-CoA and S-adenosylmethionine (SAM). The ltbA carnitine O-acyltransferase (cAT) domain then uses glucinol produced by the glycosyltransferase ltbB as an offloading substrate to release luteodienoside A. Furthermore, the PKS C-methyltransferase (CMeT) domain is capable of catalysing gem-dimethylation of the 3-hydroxy-2,2,4-trimethylocta-4,6-dienoic acid intermediate, without requiring reversible product release and recapture by the cAT domain. Since ltbA and ltbB are sufficient for the biosynthesis of luteodienoside A, the functions of the methyltransferase ltbC and the FAD-binding monooxygenase ltbD within the pathway remain obscur. This chain is Highly reducing polyketide synthase ltbA, found in Aspergillus luteorubrus.